Consider the following 170-residue polypeptide: Acireductone dioxygenase (170 aa).

Fe(2+)-binding residues include histidine 99, histidine 101, glutamate 105, and histidine 144. Histidine 99, histidine 101, glutamate 105, and histidine 144 together coordinate Ni(2+).

This sequence belongs to the acireductone dioxygenase (ARD) family. As to quaternary structure, monomer. The cofactor is Fe(2+). Requires Ni(2+) as cofactor.

The enzyme catalyses 1,2-dihydroxy-5-(methylsulfanyl)pent-1-en-3-one + O2 = 3-(methylsulfanyl)propanoate + CO + formate + 2 H(+). It carries out the reaction 1,2-dihydroxy-5-(methylsulfanyl)pent-1-en-3-one + O2 = 4-methylsulfanyl-2-oxobutanoate + formate + 2 H(+). It participates in amino-acid biosynthesis; L-methionine biosynthesis via salvage pathway; L-methionine from S-methyl-5-thio-alpha-D-ribose 1-phosphate: step 5/6. Catalyzes 2 different reactions between oxygen and the acireductone 1,2-dihydroxy-3-keto-5-methylthiopentene (DHK-MTPene) depending upon the metal bound in the active site. Fe-containing acireductone dioxygenase (Fe-ARD) produces formate and 2-keto-4-methylthiobutyrate (KMTB), the alpha-ketoacid precursor of methionine in the methionine recycle pathway. Ni-containing acireductone dioxygenase (Ni-ARD) produces methylthiopropionate, carbon monoxide and formate, and does not lie on the methionine recycle pathway. In Bacillus thuringiensis (strain Al Hakam), this protein is Acireductone dioxygenase.